The chain runs to 400 residues: Enolase (400 aa).

Gln153 lines the (2R)-2-phosphoglycerate pocket. Glu195 acts as the Proton donor in catalysis. Asp231, Glu274, and Asp301 together coordinate Mg(2+). The (2R)-2-phosphoglycerate site is built by Lys326, Arg355, Ser356, and Lys377. Lys326 serves as the catalytic Proton acceptor.

The protein belongs to the enolase family. It depends on Mg(2+) as a cofactor.

It localises to the cytoplasm. The protein resides in the secreted. Its subcellular location is the cell surface. The catalysed reaction is (2R)-2-phosphoglycerate = phosphoenolpyruvate + H2O. It participates in carbohydrate degradation; glycolysis; pyruvate from D-glyceraldehyde 3-phosphate: step 4/5. Functionally, catalyzes the reversible conversion of 2-phosphoglycerate (2-PG) into phosphoenolpyruvate (PEP). It is essential for the degradation of carbohydrates via glycolysis. The polypeptide is Enolase (Halorubrum lacusprofundi (strain ATCC 49239 / DSM 5036 / JCM 8891 / ACAM 34)).